A 186-amino-acid polypeptide reads, in one-letter code: dCTP deaminase (186 aa).

107 to 112 (KSTYAR) serves as a coordination point for dCTP. Glu-133 (proton donor/acceptor) is an active-site residue. Residues Gln-152, Tyr-166, and Gln-176 each coordinate dCTP.

It belongs to the dCTP deaminase family. Homotrimer.

The catalysed reaction is dCTP + H2O + H(+) = dUTP + NH4(+). It participates in pyrimidine metabolism; dUMP biosynthesis; dUMP from dCTP (dUTP route): step 1/2. Its function is as follows. Catalyzes the deamination of dCTP to dUTP. This is dCTP deaminase from Campylobacter jejuni subsp. jejuni serotype O:2 (strain ATCC 700819 / NCTC 11168).